Reading from the N-terminus, the 168-residue chain is Cilia- and flagella-associated protein 276 (168 aa).

Disordered stretches follow at residues alanine 35–phenylalanine 61 and histidine 149–threonine 168. Over residues alanine 38–serine 55 the composition is skewed to polar residues.

Microtubule inner protein component of sperm flagellar doublet microtubules. As to expression, predominantly expressed in nervous system tissues, such as the spinal cord, cerebrum, cerebellum, and sciatic nerve.

The protein localises to the cytoplasm. It is found in the cytoskeleton. Its subcellular location is the cilium axoneme. The protein resides in the flagellum axoneme. Functionally, microtubule inner protein (MIP) part of the dynein-decorated doublet microtubules (DMTs) in cilia axoneme, which is required for motile cilia beating. May play an important role for the maintenance of myelin-axon integrity. May affect intracellular Ca(2+) homeostasis. The sequence is that of Cilia- and flagella-associated protein 276 from Mus musculus (Mouse).